Reading from the N-terminus, the 128-residue chain is Holo-[acyl-carrier-protein] synthase (128 aa).

Mg(2+) is bound by residues D7 and E55.

It belongs to the P-Pant transferase superfamily. AcpS family. Requires Mg(2+) as cofactor.

It localises to the cytoplasm. The enzyme catalyses apo-[ACP] + CoA = holo-[ACP] + adenosine 3',5'-bisphosphate + H(+). Its function is as follows. Transfers the 4'-phosphopantetheine moiety from coenzyme A to a Ser of acyl-carrier-protein. In Moorella thermoacetica (strain ATCC 39073 / JCM 9320), this protein is Holo-[acyl-carrier-protein] synthase.